A 410-amino-acid chain; its full sequence is Cysteine desulfurase IscS (410 aa).

Pyridoxal 5'-phosphate contacts are provided by residues 80-81 (AT), N160, Q188, and 208-210 (SGH). K211 bears the N6-(pyridoxal phosphate)lysine mark. Residue T248 coordinates pyridoxal 5'-phosphate. Catalysis depends on C334, which acts as the Cysteine persulfide intermediate. Position 334 (C334) interacts with [2Fe-2S] cluster.

Belongs to the class-V pyridoxal-phosphate-dependent aminotransferase family. NifS/IscS subfamily. In terms of assembly, homodimer. Forms a heterotetramer with IscU, interacts with other sulfur acceptors. It depends on pyridoxal 5'-phosphate as a cofactor.

The protein localises to the cytoplasm. The catalysed reaction is (sulfur carrier)-H + L-cysteine = (sulfur carrier)-SH + L-alanine. Its pathway is cofactor biosynthesis; iron-sulfur cluster biosynthesis. Functionally, master enzyme that delivers sulfur to a number of partners involved in Fe-S cluster assembly, tRNA modification or cofactor biosynthesis. Catalyzes the removal of elemental sulfur atoms from cysteine to produce alanine. Functions as a sulfur delivery protein for Fe-S cluster synthesis onto IscU, an Fe-S scaffold assembly protein, as well as other S acceptor proteins. This chain is Cysteine desulfurase IscS, found in Rickettsia peacockii (strain Rustic).